The following is a 405-amino-acid chain: Fragilysin (405 aa).

The N-terminal stretch at 1–25 is a signal peptide; the sequence is MFILNFNKMKNVKLLLMLGTAALLA. Histidine 356 lines the Zn(2+) pocket. The active site involves glutamate 357. Zn(2+) contacts are provided by histidine 360 and histidine 366.

It belongs to the peptidase M10C family. Requires Zn(2+) as cofactor.

Its subcellular location is the secreted. The enzyme catalyses Broad proteolytic specificity, bonds hydrolyzed includes -Gly-|-Leu-, -Met-|-Leu-, -Phe-|-Leu-, -Cys-|-Leu-, -Leu-|-Gly-.. Diarrheal toxin that hydrolyzes gelatin, azocoll, actin, tropomyosin, and fibrinogen. This Bacteroides fragilis protein is Fragilysin (btfP).